The chain runs to 867 residues: MRFSWLEVAVTAASLANANVCIPLFPWYVSSPPFYPSPWANGQGEWAEAHQRAVEIVSQMTLTEKVNLTTGTGWMMEECVGQTGSVPRLGINWGLCGQDSPLGIRFSDLNSAFPAGINVAATWDKTLAYLRGKAMGEEFNDKGIDIQLGPAAGPLGKYPDGGRIWEGFSPDPALTGVLFAETIKGIQDAGVIATAKHYILNEQEQFRQVAEAQGYGYNITETLSSNVDDKTMHELYLWPFADAVRAGVGAIMCSYNQINNSYGCQNSQTLNKLLKAELGFQGFVMSDWSAHHSGVGAALAGLDMSMPGDISFDDGLSFWGANMTVGVLNGTIPAWRVDDMAVRIMTAYYKVGRDRLRVPPNFSSWTRDEYGYEHAAVSEGAWKKVNDFVNVQRDHAQLIREVGSASTVLLKNVGALPLTGKERKVGIFGEDAGSNPWGPNGCENRGCDNGTLAMAWGSGTAEFPYLVTPEQAIQSEVIKNGGNVFPVTHNGALTQMANIASQSSVSLVFVNADAGEGFISVDGNIGDRKNLTLWKNGEEVIKTVASHSNNTVVVIHSVGPILVDEWHDNPNITAILWAGLPGQESGNSIADVLYGRVNPSAKTPFTWGKTRESYGAPLVTKPNNGNGAPQDDFSEGVFIDYRYFDKRNETPVYEFGFGLSYTSFGYSHLRVQPLNGSTYVPATGTTGPAPAYGSIGSAADYLFPEGLKRITKFIYPWLNSTDLKASSADPNYGWEDSEYIPEAATDGSPQPILKAGGAPGGNPTLYHDLVKVSATITNTGNVAGYEVPQLYVSLGGPNEPRVVLRKFDRIHLAPGEQKVWTTTLTRRDLANWDVEAQDWVITKYPKRVYVGSSSRKLPLRAPLPRVQ.

The first 18 residues, 1 to 18, serve as a signal peptide directing secretion; that stretch reads MRFSWLEVAVTAASLANA. N-linked (GlcNAc...) asparagine glycans are attached at residues N67, N218, and N259. Residue D287 is part of the active site. 9 N-linked (GlcNAc...) asparagine glycosylation sites follow: N322, N329, N361, N449, N530, N549, N571, N675, and N719.

This sequence belongs to the glycosyl hydrolase 3 family.

The protein resides in the secreted. It carries out the reaction Hydrolysis of terminal, non-reducing beta-D-glucosyl residues with release of beta-D-glucose.. It functions in the pathway glycan metabolism; cellulose degradation. In terms of biological role, beta-glucosidases are one of a number of cellulolytic enzymes involved in the degradation of cellulosic biomass. Catalyzes the last step releasing glucose from the inhibitory cellobiose. The sequence is that of Probable beta-glucosidase A (bglA) from Aspergillus clavatus (strain ATCC 1007 / CBS 513.65 / DSM 816 / NCTC 3887 / NRRL 1 / QM 1276 / 107).